A 107-amino-acid polypeptide reads, in one-letter code: Prostate collagen triple helix protein (107 aa).

Residues 47–107 (PLIPRTPGSP…PTSPLFPFCP (61 aa)) are disordered. Over residues 81 to 100 (VGPKGPMLPLGPSGPVGPTS) the composition is skewed to low complexity.

In terms of tissue distribution, expressed in prostate and testis. Weakly or not expressed in other tissues. Overexpressed in prostate cancers.

The protein resides in the cytoplasm. In terms of biological role, may be involved in growth and survival of prostate cancer cells through the TAF-Ibeta pathway. The sequence is that of Prostate collagen triple helix protein (PCOTH) from Homo sapiens (Human).